Reading from the N-terminus, the 207-residue chain is Protein ERP4 (207 aa).

Residues 1 to 21 (MRVFTLIAILFSSSLLTHAFS) form the signal peptide. Topologically, residues 22–174 (SNYAPVGISL…TVSSTESRLT (153 aa)) are lumenal. The region spanning 36 to 118 (KECLYYDLSS…PKKVEITLEK (83 aa)) is the GOLD domain. Residues 175 to 195 (WLSLLIMGVMVGISIVQALII) form a helical membrane-spanning segment. The Cytoplasmic segment spans residues 196–207 (QFFFTSRQKNYV).

Belongs to the EMP24/GP25L family.

It is found in the endoplasmic reticulum membrane. Functionally, involved in vesicular protein trafficking. The polypeptide is Protein ERP4 (ERP4) (Saccharomyces cerevisiae (strain ATCC 204508 / S288c) (Baker's yeast)).